We begin with the raw amino-acid sequence, 866 residues long: FHIP family protein v1g243165 (866 aa).

Disordered regions lie at residues 739–761 and 781–814; these read RDGP…ASTS and GSTA…ESQT. Residues 751–761 show a composition bias toward low complexity; the sequence is SIGSIGSASTS.

Belongs to the FHIP family.

This chain is FHIP family protein v1g243165, found in Nematostella vectensis (Starlet sea anemone).